The sequence spans 35 residues: Thaumatin-like protein 6 (35 aa).

Belongs to the thaumatin family.

In Glebionis coronaria (Crown daisy), this protein is Thaumatin-like protein 6.